The following is a 430-amino-acid chain: Serine--tRNA ligase (430 aa).

Position 237 to 239 (237 to 239 (TAE)) interacts with L-serine. Residue 268–270 (RSE) coordinates ATP. Glu291 is an L-serine binding site. 355–358 (EISS) lines the ATP pocket. Ser391 contacts L-serine.

This sequence belongs to the class-II aminoacyl-tRNA synthetase family. Type-1 seryl-tRNA synthetase subfamily. In terms of assembly, homodimer. The tRNA molecule binds across the dimer.

The protein resides in the cytoplasm. It carries out the reaction tRNA(Ser) + L-serine + ATP = L-seryl-tRNA(Ser) + AMP + diphosphate + H(+). The catalysed reaction is tRNA(Sec) + L-serine + ATP = L-seryl-tRNA(Sec) + AMP + diphosphate + H(+). The protein operates within aminoacyl-tRNA biosynthesis; selenocysteinyl-tRNA(Sec) biosynthesis; L-seryl-tRNA(Sec) from L-serine and tRNA(Sec): step 1/1. In terms of biological role, catalyzes the attachment of serine to tRNA(Ser). Is also able to aminoacylate tRNA(Sec) with serine, to form the misacylated tRNA L-seryl-tRNA(Sec), which will be further converted into selenocysteinyl-tRNA(Sec). The sequence is that of Serine--tRNA ligase from Enterobacter sp. (strain 638).